The following is a 163-amino-acid chain: UPF0416 protein RBE_1121 (163 aa).

This sequence belongs to the UPF0416 family.

The protein is UPF0416 protein RBE_1121 of Rickettsia bellii (strain RML369-C).